A 372-amino-acid polypeptide reads, in one-letter code: Putative F-box/kelch-repeat protein At3g22730 (372 aa).

The F-box domain occupies 1–50 (MMMSDLSLDLVEEILSRVPATSLKRLRSTCKLWNALFKNPGFTKKQFLKA). 3 Kelch repeats span residues 155 to 204 (ILRC…SFKG), 245 to 293 (ALSV…PIRG), and 324 to 372 (KVYI…IIKE).

In Arabidopsis thaliana (Mouse-ear cress), this protein is Putative F-box/kelch-repeat protein At3g22730.